The sequence spans 345 residues: MPPPALVLLLGFLCHVAIAGRTCPKPDELPFSTVVPLKRTYEPGEQIVFSCQPGYVSRGGIRRFTCPLTGLWPINTLKCMPRVCPFAGILENGTVRYTTFEYPNTISFSCHTGFYLKGASSAKCTEEGKWSPDLPVCAPITCPPPPIPKFASLSVYKPLAGNNSFYGSKAVFKCLPHHAMFGNDTVTCTEHGNWTQLPECREVRCPFPSRPDNGFVNHPANPVLYYKDTATFGCHETYSLDGPEEVECSKFGNWSAQPSCKASCKLSIKRATVIYEGERVAIQNKFKNGMLHGQKVSFFCKHKEKKCSYTEDAQCIDGTIEIPKCFKEHSSLAFWKTDASDVKPC.

An N-terminal signal peptide occupies residues 1 to 19 (MPPPALVLLLGFLCHVAIA). Sushi domains are found at residues 21-81 (RTCP…KCMP), 82-139 (RVCP…VCAP), 140-202 (ITCP…ECRE), and 203-262 (VRCP…SCKA). Cystine bridges form between Cys23–Cys66, Cys51–Cys79, Cys84–Cys124, Cys110–Cys137, Cys142–Cys188, Cys174–Cys200, Cys205–Cys248, Cys234–Cys260, Cys264–Cys315, Cys300–Cys325, and Cys307–Cys345. Thr33 carries O-linked (GalNAc...) threonine glycosylation. An N-linked (GlcNAc...) asparagine glycan is attached at Asn92. 3 N-linked (GlcNAc...) asparagine glycosylation sites follow: Asn162, Asn183, and Asn193. Asn253 carries an N-linked (GlcNAc...) asparagine glycan. Residues 263 to 345 (SCKLSIKRAT…KTDASDVKPC (83 aa)) form a sushi-like region.

As to expression, expressed by the liver and secreted in plasma.

The protein localises to the secreted. Its function is as follows. Binds to various kinds of negatively charged substances such as heparin, phospholipids, and dextran sulfate. May prevent activation of the intrinsic blood coagulation cascade by binding to phospholipids on the surface of damaged cells. In Bos taurus (Bovine), this protein is Beta-2-glycoprotein 1 (APOH).